Here is a 251-residue protein sequence, read N- to C-terminus: Hydroxyacylglutathione hydrolase (251 aa).

Zn(2+) is bound by residues His53, His55, Asp57, His58, His110, Asp127, and His165.

It belongs to the metallo-beta-lactamase superfamily. Glyoxalase II family. In terms of assembly, monomer. Zn(2+) is required as a cofactor.

It catalyses the reaction an S-(2-hydroxyacyl)glutathione + H2O = a 2-hydroxy carboxylate + glutathione + H(+). It functions in the pathway secondary metabolite metabolism; methylglyoxal degradation; (R)-lactate from methylglyoxal: step 2/2. Its function is as follows. Thiolesterase that catalyzes the hydrolysis of S-D-lactoyl-glutathione to form glutathione and D-lactic acid. This is Hydroxyacylglutathione hydrolase from Edwardsiella ictaluri (strain 93-146).